Here is a 479-residue protein sequence, read N- to C-terminus: Glutamate--tRNA ligase (479 aa).

A 'HIGH' region motif is present at residues 9 to 19; it reads PSPTGNLHIGT. The 'KMSKS' region signature appears at 243-247; sequence KLSKR. K246 serves as a coordination point for ATP.

This sequence belongs to the class-I aminoacyl-tRNA synthetase family. Glutamate--tRNA ligase type 1 subfamily. In terms of assembly, monomer.

It localises to the cytoplasm. It catalyses the reaction tRNA(Glu) + L-glutamate + ATP = L-glutamyl-tRNA(Glu) + AMP + diphosphate. Catalyzes the attachment of glutamate to tRNA(Glu) in a two-step reaction: glutamate is first activated by ATP to form Glu-AMP and then transferred to the acceptor end of tRNA(Glu). This is Glutamate--tRNA ligase from Synechococcus sp. (strain JA-3-3Ab) (Cyanobacteria bacterium Yellowstone A-Prime).